Here is a 213-residue protein sequence, read N- to C-terminus: MRSKYIVIEGLEGAGKTTARNVVVETLEQLGIRDMVFTREPGGTQLAEKLRSLVLDIKSVGDEVITDKAEVLMFYAARVQLVETVIKPALANGTWVIGDRHDLSTQAYQGGGRGIDQHMLATLRDAVLGGVRPDLTLYLDVTPEVGLKRARARGELDRIEQESFDFFNRTRARYLELAAQDKSIHTIDATQPLEAVMDAIRTTVTNWVKELDA.

Position 10–17 (10–17) interacts with ATP; sequence GLEGAGKT.

It belongs to the thymidylate kinase family.

The catalysed reaction is dTMP + ATP = dTDP + ADP. In terms of biological role, phosphorylation of dTMP to form dTDP in both de novo and salvage pathways of dTTP synthesis. This is Thymidylate kinase from Escherichia coli O6:H1 (strain CFT073 / ATCC 700928 / UPEC).